A 378-amino-acid polypeptide reads, in one-letter code: SWI/SNF-related matrix-associated actin-dependent regulator of chromatin subfamily B member 1 (378 aa).

The DNA-binding stretch occupies residues 1-106 (MIMALSKTFG…DEKYKAVSIS (106 aa)).

Belongs to the SNF5 family. As to quaternary structure, component of the multiprotein chromatin-remodeling complexes SWI/SNF. Component of neural progenitors-specific chromatin remodeling complex (npBAF complex) and the neuron-specific chromatin remodeling complex (nBAF complex). Component of the BAF (SWI/SNF) chromatin remodeling complex. Component of the SWI/SNF-B (PBAF) chromatin remodeling complex. Binds to double-stranded DNA.

It localises to the nucleus. In terms of biological role, involved in chromatin-remodeling. Core component of the BAF (SWI/SNF) complex. This ATP-dependent chromatin-remodeling complex plays important roles in cell proliferation and differentiation, in cellular antiviral activities and inhibition of tumor formation. Belongs to the neural progenitors-specific chromatin remodeling complex (npBAF complex) and the neuron-specific chromatin remodeling complex (nBAF complex) and may play a role in neural development. This chain is SWI/SNF-related matrix-associated actin-dependent regulator of chromatin subfamily B member 1 (smarcb1), found in Xenopus laevis (African clawed frog).